The chain runs to 466 residues: Probable Xaa-Pro aminopeptidase pepP (466 aa).

Residues aspartate 264, aspartate 275, glutamate 398, and glutamate 438 each contribute to the Mn(2+) site.

The protein belongs to the peptidase M24B family. Requires Mn(2+) as cofactor.

It carries out the reaction Release of any N-terminal amino acid, including proline, that is linked to proline, even from a dipeptide or tripeptide.. In terms of biological role, catalyzes the removal of a penultimate prolyl residue from the N-termini of peptides. The protein is Probable Xaa-Pro aminopeptidase pepP (pepP) of Aspergillus terreus (strain NIH 2624 / FGSC A1156).